Reading from the N-terminus, the 323-residue chain is 3-dehydroquinate synthase (323 aa).

It belongs to the archaeal-type DHQ synthase family.

It catalyses the reaction 2-amino-2,3,7-trideoxy-D-lyxo-hept-6-ulosonate + NAD(+) + H2O = 3-dehydroquinate + NH4(+) + NADH + H(+). Catalyzes the oxidative deamination and cyclization of 2-amino-3,7-dideoxy-D-threo-hept-6-ulosonic acid (ADH) to yield 3-dehydroquinate (DHQ), which is fed into the canonical shikimic pathway of aromatic amino acid biosynthesis. The polypeptide is 3-dehydroquinate synthase (Archaeoglobus fulgidus (strain ATCC 49558 / DSM 4304 / JCM 9628 / NBRC 100126 / VC-16)).